The following is an 842-amino-acid chain: Microcephalin (842 aa).

Positions 1–93 (MAAPILKDVV…AHIDESLFPA (93 aa)) constitute a BRCT 1 domain. Residues Ser279, Ser287, Ser296, and Ser333 each carry the phosphoserine modification. Thr335 bears the Phosphothreonine mark. A compositionally biased stretch (basic residues) spans 346-359 (HSRPRSSSVKRKRV). 3 disordered regions span residues 346-375 (HSRPRSSSVKRKRVSYGFHSPPKEKCKRKR), 418-443 (PDNLKERNSENLPPKSQLPSNPAQFS), and 563-624 (VGLK…PTRR). 2 stretches are compositionally biased toward polar residues: residues 434–443 (QLPSNPAQFS) and 566–582 (KSTQDKGTTSKISNSSE). Over residues 586–608 (PSEHEPRSVVDCNVERSAEEKEN) the composition is skewed to basic and acidic residues. 2 BRCT domains span residues 647 to 737 (SGKG…PFEL) and 758 to 840 (YRGT…NYLL).

As to quaternary structure, interacts with CDC27 and maybe other components of the APC/C complex. Interacts with histone variant H2AX under DNA damage conditions.

Its subcellular location is the cytoplasm. The protein localises to the cytoskeleton. It localises to the microtubule organizing center. The protein resides in the centrosome. Implicated in chromosome condensation and DNA damage induced cellular responses. May play a role in neurogenesis and regulation of the size of the cerebral cortex. This chain is Microcephalin, found in Macaca fascicularis (Crab-eating macaque).